Consider the following 574-residue polypeptide: Laccase-12 (574 aa).

The signal sequence occupies residues 1 to 27 (MAAASSVLRCCLLVAALMTLSAMGAEA). Plastocyanin-like domains are found at residues 35–151 (DVQT…PPAG) and 161–314 (EEVP…YDDP). A glycan (N-linked (GlcNAc...) asparagine) is linked at Asn81. Residues His85, His87, His130, and His132 each contribute to the Cu cation site. Residues Asn173, Asn190, Asn206, Asn242, Asn302, Asn335, Asn342, Asn381, Asn388, Asn398, Asn434, Asn441, and Asn447 are each glycosylated (N-linked (GlcNAc...) asparagine). The Plastocyanin-like 3 domain occupies 424 to 558 (NFPYYPLNPF…KMAWLVLDGS (135 aa)). Cu cation contacts are provided by His475, His478, His480, His537, Cys538, His539, and His543.

This sequence belongs to the multicopper oxidase family. Requires Cu cation as cofactor.

Its subcellular location is the secreted. It localises to the extracellular space. The protein localises to the apoplast. The catalysed reaction is 4 hydroquinone + O2 = 4 benzosemiquinone + 2 H2O. Lignin degradation and detoxification of lignin-derived products. The polypeptide is Laccase-12 (LAC12) (Oryza sativa subsp. japonica (Rice)).